Consider the following 347-residue polypeptide: NADH-ubiquinone oxidoreductase chain 2 (347 aa).

Helical transmembrane passes span 3–23, 25–45, 60–80, 96–116, 149–169, 178–198, 200–220, 237–257, 274–294, and 323–343; these read PPILLIILLTMISGTMIVLTS, HWLTIWIGLEMNMLAIIPILM, LLTQATASMILMMGITINLMF, AMVTTALAMKLGLAPFHFWVP, IDPNLLLPMAITSILIGGWGG, ILAYSSIAHMGWMTAVTLYNP, MMLLNLTIYIIMTTTTFMLFM, APLITPLILMLMLSLGGLPPL, EMIIIPTIMAITALLNLYFYM, and MILLSPLTVVSTMLLPITPLL.

This sequence belongs to the complex I subunit 2 family. In terms of assembly, core subunit of respiratory chain NADH dehydrogenase (Complex I) which is composed of 45 different subunits. Interacts with TMEM242.

It localises to the mitochondrion inner membrane. It carries out the reaction a ubiquinone + NADH + 5 H(+)(in) = a ubiquinol + NAD(+) + 4 H(+)(out). In terms of biological role, core subunit of the mitochondrial membrane respiratory chain NADH dehydrogenase (Complex I) which catalyzes electron transfer from NADH through the respiratory chain, using ubiquinone as an electron acceptor. Essential for the catalytic activity and assembly of complex I. This Mungos mungo (Banded mongoose) protein is NADH-ubiquinone oxidoreductase chain 2.